Reading from the N-terminus, the 247-residue chain is Carboxy-S-adenosyl-L-methionine synthase (247 aa).

S-adenosyl-L-methionine is bound by residues tyrosine 39, 64-66 (GCS), 89-90 (DN), 117-118 (DI), asparagine 132, and arginine 199.

The protein belongs to the class I-like SAM-binding methyltransferase superfamily. Cx-SAM synthase family. In terms of assembly, homodimer.

It catalyses the reaction prephenate + S-adenosyl-L-methionine = carboxy-S-adenosyl-L-methionine + 3-phenylpyruvate + H2O. Functionally, catalyzes the conversion of S-adenosyl-L-methionine (SAM) to carboxy-S-adenosyl-L-methionine (Cx-SAM). In Cronobacter sakazakii (strain ATCC BAA-894) (Enterobacter sakazakii), this protein is Carboxy-S-adenosyl-L-methionine synthase.